Consider the following 451-residue polypeptide: Tubulin gamma-1 chain (451 aa).

Ser-131 bears the Phosphoserine; by BRSK1 mark. A GTP-binding site is contributed by 142 to 148 (AGGTGSG).

The protein belongs to the tubulin family. As to quaternary structure, component of the gamma-tubulin ring complex (gTuRC) consisting of TUBGCP2, TUBGCP3, TUBGCP4, TUBGCP5 and TUBGCP6 and gamma-tubulin TUBG1 or TUBG2. TUBGCP2, TUBGCP3, TUBGCP4, TUBGCP5 and TUBGCP6 assemble in a 5:5:2:1:1 stoichiometry; each is associated with a gamma-tubulin, thereby arranging 14 gamma-tubulins in a helical manner. Gamma-tubulin at the first position is blocked by TUBGCP3 at the last position, allowing 13 protafilaments to grow into a microtubule. The gTuRC (via TUBGCP3 and TUBGCP6) interacts with ACTB and MZT1; the interactions form a luminal bridge that stabilizes the initial structure during complex assembly. The gTuRC (via TUBGCP2) interacts with MZT2A/MZT2B and CDK5RAP2 (via CM1 motif); the interactions play a role in gTuRC activation. Interacts with alpha-beta tubulin heterodimers; the interaction allows microtubules to nucleate from the gTuRC. Interacts with B9D2. Interacts with CDK5RAP2; the interaction is leading to centrosomal localization of TUBG1 and CDK5RAP2. Interacts with CIMAP3. Interacts with SAS6 and NUP62 at the centrosome. Interacts with EML3 (phosphorylated at 'Thr-881') and HAUS8. Interacts with DNM2; this interaction may participate in centrosome cohesion. Interacts with CCDC66. Post-translationally, phosphorylation at Ser-131 by BRSK1 regulates centrosome duplication, possibly by mediating relocation of gamma-tubulin and its associated proteins from the cytoplasm to the centrosome.

The protein resides in the cytoplasm. It localises to the cytoskeleton. Its subcellular location is the microtubule organizing center. The protein localises to the centrosome. It is found in the spindle. Functionally, tubulin is the major constituent of microtubules, protein filaments consisting of alpha- and beta-tubulin heterodimers. Gamma-tubulin is a key component of the gamma-tubulin ring complex (gTuRC) which mediates microtubule nucleation. The gTuRC regulates the minus-end nucleation of alpha-beta tubulin heterodimers that grow into microtubule protafilaments, a critical step in centrosome duplication and spindle formation. The chain is Tubulin gamma-1 chain from Homo sapiens (Human).